A 774-amino-acid polypeptide reads, in one-letter code: Dapper homolog 2 (774 aa).

A coiled-coil region spans residues 67–93 (PEQQLEAALAALQEQLSRLRQQDIGLK). Disordered regions lie at residues 188-225 (RPQATEEGARPPGSVEDAGQPWGTFWPRPVSTGDLDRA), 295-319 (TPQRGGPSFPRESPRGPAGLNTIQT), 345-500 (TPAK…EKIK), and 624-710 (CPES…GAQS). Positions 438 to 452 (VQASPSSKAQQTPSA) are enriched in polar residues. The segment covering 637 to 648 (RRAGGPLARGRP) has biased composition (low complexity). Composition is skewed to basic and acidic residues over residues 655 to 672 (AYTRSDSEPSKHSAECDP) and 686 to 700 (SSDHTTNRFGDRESS). A PDZ-binding motif is present at residues 771–774 (MTMV).

It belongs to the dapper family. Can form homodimers and heterodimers with DACT1 or DACT3. Interacts with CSNK1D, PKA catalytic subunit, PKC-type kinase, CSNK2B, DVL1, DVL2, DVL3, VANGL1, VANGL2, TGFBR1, CTNNB1, CTNND2, CTNND1, LEF1, TCF7, TCF7L1 and HDAC1.

In terms of biological role, involved in regulation of intracellular signaling pathways during development. Negatively regulates the Nodal signaling pathway, possibly by promoting the lysosomal degradation of Nodal receptors, such as TGFBR1. May be involved in control of the morphogenetic behavior of kidney ureteric bud cells by keeping cells epithelial and restraining their mesenchymal character. May play an inhibitory role in the re-epithelialization of skin wounds by attenuating TGF-beta signaling. The chain is Dapper homolog 2 (DACT2) from Homo sapiens (Human).